We begin with the raw amino-acid sequence, 297 residues long: Putative heme-binding peroxidase (297 aa).

Residue H74 is the Proton acceptor of the active site. H198 lines the heme b pocket. W214 serves as the catalytic Tryptophan radical intermediate.

It belongs to the peroxidase family. Cytochrome c peroxidase subfamily. Requires heme b as cofactor.

Destroys radicals which are normally produced within the cells and which are toxic to biological systems. This Yarrowia lipolytica (strain CLIB 122 / E 150) (Yeast) protein is Putative heme-binding peroxidase.